The primary structure comprises 792 residues: Xaa-Pro dipeptidyl-peptidase (792 aa).

Catalysis depends on charge relay system residues Ser-363, Asp-482, and His-513.

It belongs to the peptidase S15 family. In terms of assembly, homodimer.

The protein resides in the cytoplasm. The enzyme catalyses Hydrolyzes Xaa-Pro-|- bonds to release unblocked, N-terminal dipeptides from substrates including Ala-Pro-|-p-nitroanilide and (sequentially) Tyr-Pro-|-Phe-Pro-|-Gly-Pro-|-Ile.. Removes N-terminal dipeptides sequentially from polypeptides having unsubstituted N-termini provided that the penultimate residue is proline. The sequence is that of Xaa-Pro dipeptidyl-peptidase from Lactobacillus delbrueckii subsp. bulgaricus (strain ATCC BAA-365 / Lb-18).